Reading from the N-terminus, the 279-residue chain is MAEALCSGSVASPCGEVGVGFAAGLVRGAAAAAALAESVPIGGYSSKSTFPSGRVALTERKARPLPRNLEAAHGQMNLTIGKAMRWWEKCLQPNMREIESAQDLADSLLNAGDKLVVVDFFSPGCGGCRALHPKIAQLAEKNPEVLFLQVNYEKHKSMCYSLHVHVLPFFRFYRGAQGRVSSFSCTNATIKKFKDALAKHGPDRCGLGPAKGLEESELMALAINRDLNFTYTPNQDLVPIADALLKEAAAPGGPWLPLPATATQLFIQGSENSLLSSGR.

The 147-residue stretch at 56–202 (ALTERKARPL…FKDALAKHGP (147 aa)) folds into the Thioredoxin domain. Catalysis depends on nucleophile residues Cys-125 and Cys-128. Residues Cys-125 and Cys-128 are joined by a disulfide bond.

Belongs to the thioredoxin family.

Probable thiol-disulfide oxidoreductase that may participate in various redox reactions. The polypeptide is Thioredoxin-like 1-1, chloroplastic (Oryza sativa subsp. japonica (Rice)).